The chain runs to 183 residues: Small ribosomal subunit protein uS4c (183 aa).

The 62-residue stretch at 82 to 143 folds into the S4 RNA-binding domain; it reads MRLDNILFRL…KQRSKALIQN (62 aa).

It belongs to the universal ribosomal protein uS4 family. In terms of assembly, part of the 30S ribosomal subunit. Contacts protein S5. The interaction surface between S4 and S5 is involved in control of translational fidelity.

The protein localises to the plastid. Its subcellular location is the chloroplast. In terms of biological role, one of the primary rRNA binding proteins, it binds directly to 16S rRNA where it nucleates assembly of the body of the 30S subunit. Functionally, with S5 and S12 plays an important role in translational accuracy. The protein is Small ribosomal subunit protein uS4c (rps4) of Crocosmia sp. (strain Porto Alegre 034).